We begin with the raw amino-acid sequence, 397 residues long: Mannonate dehydratase (397 aa).

The protein belongs to the mannonate dehydratase family. The cofactor is Fe(2+). Requires Mn(2+) as cofactor.

It carries out the reaction D-mannonate = 2-dehydro-3-deoxy-D-gluconate + H2O. The protein operates within carbohydrate metabolism; pentose and glucuronate interconversion. In terms of biological role, catalyzes the dehydration of D-mannonate. The sequence is that of Mannonate dehydratase from Yersinia pestis bv. Antiqua (strain Antiqua).